We begin with the raw amino-acid sequence, 198 residues long: Inner membrane-spanning protein YciB (198 aa).

A run of 5 helical transmembrane segments spans residues 36–56, 67–87, 90–110, 135–155, and 162–182; these read IYSA…AIFI, LTLV…SETF, WKAP…HFIG, VAWI…AFTF, and FKVF…GIYL.

It belongs to the YciB family.

The protein resides in the cell inner membrane. In terms of biological role, plays a role in cell envelope biogenesis, maintenance of cell envelope integrity and membrane homeostasis. This Pseudomonas fluorescens (strain SBW25) protein is Inner membrane-spanning protein YciB.